The primary structure comprises 148 residues: uncharacterized protein (148 aa).

The region spanning 3 to 64 is the HTH asnC-type domain; sequence LDALDRKILE…KLNYESIGYD (62 aa). The H-T-H motif DNA-binding region spans 22 to 41; sequence YREIAKDLNVAVGTIYNRIK.

This is an uncharacterized protein from Pyrococcus horikoshii (strain ATCC 700860 / DSM 12428 / JCM 9974 / NBRC 100139 / OT-3).